The primary structure comprises 187 residues: Serine/arginine-rich splicing factor RSZ21 (187 aa).

Positions 2 to 73 constitute an RRM domain; sequence TRVYVGNLDP…WRVELSHKDK (72 aa). Disordered regions lie at residues 68-89 and 105-187; these read LSHK…IEDS and RRGR…ANGV. The CCHC-type zinc-finger motif lies at 89-106; sequence SKCYECGELGHFARECRR. A compositionally biased stretch (basic residues) spans 107–122; that stretch reads GRGSVRRRSPSPRRRR. A phosphoserine mark is found at Ser123, Ser132, Ser134, Ser140, Ser146, and Ser159. Over residues 136–155 the composition is skewed to basic residues; it reads RGRRSPPRRRSVTPPRRGRS. Over residues 165 to 177 the composition is skewed to basic and acidic residues; the sequence is SRRDSPRRRDSPY. Low complexity predominate over residues 178-187; the sequence is GRRSPYANGV. Residue Ser181 is modified to Phosphoserine.

It belongs to the splicing factor SR family. RSZ subfamily. As to quaternary structure, component of the spliceosome. Interacts with SNRNP35, AFC2, CYP59, RS2Z33 and RNU1. Interacts with MOS14. Post-translationally, extensively phosphorylated on serine residues in the RS domain. Phosphorylated by AFC2. In terms of tissue distribution, expressed in roots, leaves, flowers and siliques.

Its subcellular location is the nucleus speckle. Functionally, probably involved in intron recognition and spliceosome assembly. This chain is Serine/arginine-rich splicing factor RSZ21 (RSZ21), found in Arabidopsis thaliana (Mouse-ear cress).